Consider the following 608-residue polypeptide: 1-phosphatidylinositol 4,5-bisphosphate phosphodiesterase zeta-1 (608 aa).

The region spanning 35–70 (CSYIHVKQIFKDNDRLKQGRITIEEFRAIYRIITHR) is the EF-hand domain. Residues 155–299 (QDMTHPLNDY…LKFKILVKNK (145 aa)) enclose the PI-PLC X-box domain. Residues H170 and H215 contribute to the active site. The tract at residues 305 to 324 (KETHERKGSDKRGDNQDKET) is disordered. The 117-residue stretch at 349–465 (LSDLVIYTKA…GYILKPHFLR (117 aa)) folds into the PI-PLC Y-box domain. Residues 465–589 (RESKSYFNPS…KGYRRIPLFS (125 aa)) enclose the C2 domain.

Interacts via its C2 domain with PtdIns(3)P and, to a lesser extent, PtdIns(5)P in vitro. Ca(2+) is required as a cofactor. Expressed specifically in testis and sperm. Weakly expressed in pancreatic-duct cells. Up-regulated in pancreatic-duct cells from patients with cystic fibrosis.

The protein resides in the nucleus. It is found in the cytoplasm. It localises to the perinuclear region. The catalysed reaction is a 1,2-diacyl-sn-glycero-3-phospho-(1D-myo-inositol-4,5-bisphosphate) + H2O = 1D-myo-inositol 1,4,5-trisphosphate + a 1,2-diacyl-sn-glycerol + H(+). Functionally, the production of the second messenger molecules diacylglycerol (DAG) and inositol 1,4,5-trisphosphate (IP3) is mediated by activated phosphatidylinositol-specific phospholipase C enzymes. In vitro, hydrolyzes PtdIns(4,5)P2 in a Ca(2+)-dependent manner. Triggers intracellular Ca(2+) oscillations in oocytes solely during M phase and is involved in inducing oocyte activation and initiating embryonic development up to the blastocyst stage. Is therefore a strong candidate for the egg-activating soluble sperm factor that is transferred from the sperm into the egg cytoplasm following gamete membrane fusion. May exert an inhibitory effect on phospholipase-C-coupled processes that depend on calcium ions and protein kinase C, including CFTR trafficking and function. This Homo sapiens (Human) protein is 1-phosphatidylinositol 4,5-bisphosphate phosphodiesterase zeta-1.